Reading from the N-terminus, the 192-residue chain is Adenylate kinase (192 aa).

10 to 18 (GVPGVGGTT) lines the ATP pocket.

This sequence belongs to the archaeal adenylate kinase family. As to quaternary structure, monomer.

Its subcellular location is the cytoplasm. The enzyme catalyses AMP + ATP = 2 ADP. The polypeptide is Adenylate kinase (Methanococcus maripaludis (strain DSM 14266 / JCM 13030 / NBRC 101832 / S2 / LL)).